The chain runs to 182 residues: uncharacterized protein (182 aa).

Positions 1–26 (MIRALCTIVLIAAGVAVALYLSLVYG) are cleaved as a signal peptide. The segment at 68 to 90 (YTERPYPVSSTQSPTTTQSPTTT) is disordered. Low complexity predominate over residues 74–90 (PVSSTQSPTTTQSPTTT).

This is an uncharacterized protein from Dryophytes versicolor (chameleon treefrog).